Here is a 923-residue protein sequence, read N- to C-terminus: Tyrosine-protein kinase receptor torso (923 aa).

Residues 1-20 form the signal peptide; that stretch reads MLIFYAKYAFIFWFFVGSNQ. The Extracellular segment spans residues 21–399; sequence GEMLLMDKIS…VLLSEGNMVK (379 aa). N-linked (GlcNAc...) asparagine glycosylation is found at N37, N63, N107, N142, N146, N287, N298, N314, N326, N342, N348, and N377. A helical membrane pass occupies residues 400–420; sequence LVLFIIVPICCILMLCSLTFC. At 421 to 923 the chain is on the cytoplasmic side; sequence RRNRSEVQAL…EEELYLEPLN (503 aa). Residues 475–874 enclose the Protein kinase domain; the sequence is VLLQDVLGEG…TFSALKHRLG (400 aa). ATP contacts are provided by residues 481-489 and K502; that span reads LGEGAFGLV. S608 is modified (phosphoserine). Residues 656-687 are disordered; the sequence is YIPKTAEAPKDRPKRKLKPQPKKDSKQDFKSD. Positions 676–687 are enriched in basic and acidic residues; the sequence is PKKDSKQDFKSD. D741 (proton acceptor) is an active-site residue.

This sequence belongs to the protein kinase superfamily. Tyr protein kinase family. Mg(2+) serves as cofactor. In terms of processing, may be auto-phosphorylated on tyrosine residues.

The protein resides in the membrane. It catalyses the reaction L-tyrosyl-[protein] + ATP = O-phospho-L-tyrosyl-[protein] + ADP + H(+). Probable receptor tyrosine kinase which is required for determination of anterior and posterior terminal structures in the embryo. During postembryonic development, involved in the initiation of metamorphosis probably by inducing the production of ecdysone in response to prothoracicotropic hormone Ptth. Binding to Ptth stimulates activation of canonical MAPK signaling leading to ERK phosphorylation. In Drosophila melanogaster (Fruit fly), this protein is Tyrosine-protein kinase receptor torso (tor).